The sequence spans 357 residues: Carbamoyl phosphate synthase small chain (357 aa).

A CPSase region spans residues 1-168; the sequence is MSKRLLILED…STATAYPSPN (168 aa). Residues Ser46, Gly220, and Gly222 each coordinate L-glutamine. A Glutamine amidotransferase type-1 domain is found at 172–357; that stretch reads KVVVVDFGLK…FMDLMDNFKK (186 aa). The active-site Nucleophile is Cys247. L-glutamine contacts are provided by Leu248, Gln251, Asn289, Gly291, and Tyr292. Residues His331 and Asp333 contribute to the active site.

The protein belongs to the CarA family. In terms of assembly, composed of two chains; the small (or glutamine) chain promotes the hydrolysis of glutamine to ammonia, which is used by the large (or ammonia) chain to synthesize carbamoyl phosphate. Tetramer of heterodimers (alpha,beta)4.

The enzyme catalyses hydrogencarbonate + L-glutamine + 2 ATP + H2O = carbamoyl phosphate + L-glutamate + 2 ADP + phosphate + 2 H(+). It carries out the reaction L-glutamine + H2O = L-glutamate + NH4(+). The protein operates within amino-acid biosynthesis; L-arginine biosynthesis; carbamoyl phosphate from bicarbonate: step 1/1. It participates in pyrimidine metabolism; UMP biosynthesis via de novo pathway; (S)-dihydroorotate from bicarbonate: step 1/3. Small subunit of the glutamine-dependent carbamoyl phosphate synthetase (CPSase). CPSase catalyzes the formation of carbamoyl phosphate from the ammonia moiety of glutamine, carbonate, and phosphate donated by ATP, constituting the first step of 2 biosynthetic pathways, one leading to arginine and/or urea and the other to pyrimidine nucleotides. The small subunit (glutamine amidotransferase) binds and cleaves glutamine to supply the large subunit with the substrate ammonia. The chain is Carbamoyl phosphate synthase small chain from Lactococcus lactis subsp. cremoris (strain MG1363).